A 159-amino-acid polypeptide reads, in one-letter code: MMIKIISVGKLKQKAFVDLINDYLKRINHYLKCQEIVVSDEPEPVQISNKSLEQIKSKEASKIFKNINQNDFVIALIIESNIISSETLAKKIQQWLNTFSHDICFIIGGSNGLHESIYERANYHLSMSKMTFAHGLAKVMLCEQIYRALSILNNGKYHK.

S-adenosyl-L-methionine is bound by residues leucine 76, glycine 108, and 127–132 (MSKMTF).

The protein belongs to the RNA methyltransferase RlmH family. As to quaternary structure, homodimer.

The protein localises to the cytoplasm. The enzyme catalyses pseudouridine(1915) in 23S rRNA + S-adenosyl-L-methionine = N(3)-methylpseudouridine(1915) in 23S rRNA + S-adenosyl-L-homocysteine + H(+). Functionally, specifically methylates the pseudouridine at position 1915 (m3Psi1915) in 23S rRNA. This chain is Ribosomal RNA large subunit methyltransferase H, found in Ureaplasma parvum serovar 3 (strain ATCC 27815 / 27 / NCTC 11736).